The chain runs to 394 residues: Acetate kinase (394 aa).

Position 8 (asparagine 8) interacts with Mg(2+). An ATP-binding site is contributed by lysine 15. Arginine 86 contributes to the substrate binding site. The Proton donor/acceptor role is filled by aspartate 143. ATP-binding positions include 201–205, 276–278, and 324–328; these read HLGNG, DCR, and GIGEN. Position 378 (glutamate 378) interacts with Mg(2+).

This sequence belongs to the acetokinase family. In terms of assembly, homodimer. Mg(2+) serves as cofactor. The cofactor is Mn(2+).

It is found in the cytoplasm. The catalysed reaction is acetate + ATP = acetyl phosphate + ADP. It participates in metabolic intermediate biosynthesis; acetyl-CoA biosynthesis; acetyl-CoA from acetate: step 1/2. Catalyzes the formation of acetyl phosphate from acetate and ATP. Can also catalyze the reverse reaction. The chain is Acetate kinase from Dichelobacter nodosus (strain VCS1703A).